The following is a 289-amino-acid chain: uncharacterized protein (289 aa).

In terms of domain architecture, HTH lysR-type spans 1–58; the sequence is MDEKDWILLKILHEEQSVTKTAERLFTSQPSITYRLKKIEEIFGIELFTKRHKGITFT. Positions 18-37 form a DNA-binding region, H-T-H motif; it reads VTKTAERLFTSQPSITYRLK.

It belongs to the LysR transcriptional regulatory family.

This is an uncharacterized protein from Bacillus subtilis (strain 168).